The primary structure comprises 290 residues: Inositol-1-monophosphatase (290 aa).

Residues glutamate 83, aspartate 104, isoleucine 106, and aspartate 107 each coordinate Mg(2+). Glutamate 83 contributes to the substrate binding site. Residues 106–109, arginine 206, and aspartate 235 each bind substrate; that span reads IDGT. Residue aspartate 235 participates in Mg(2+) binding.

It belongs to the inositol monophosphatase superfamily. It depends on Mg(2+) as a cofactor.

It catalyses the reaction a myo-inositol phosphate + H2O = myo-inositol + phosphate. In Mycobacterium bovis (strain ATCC BAA-935 / AF2122/97), this protein is Inositol-1-monophosphatase (suhB).